We begin with the raw amino-acid sequence, 186 residues long: Nicotinamide-nucleotide adenylyltransferase (186 aa).

Belongs to the archaeal NMN adenylyltransferase family.

It localises to the cytoplasm. It carries out the reaction beta-nicotinamide D-ribonucleotide + ATP + H(+) = diphosphate + NAD(+). It participates in cofactor biosynthesis; NAD(+) biosynthesis; NAD(+) from nicotinamide D-ribonucleotide: step 1/1. The protein is Nicotinamide-nucleotide adenylyltransferase of Pyrococcus abyssi (strain GE5 / Orsay).